The chain runs to 235 residues: Phosphoribosylaminoimidazole-succinocarboxamide synthase (235 aa).

This sequence belongs to the SAICAR synthetase family.

The enzyme catalyses 5-amino-1-(5-phospho-D-ribosyl)imidazole-4-carboxylate + L-aspartate + ATP = (2S)-2-[5-amino-1-(5-phospho-beta-D-ribosyl)imidazole-4-carboxamido]succinate + ADP + phosphate + 2 H(+). It participates in purine metabolism; IMP biosynthesis via de novo pathway; 5-amino-1-(5-phospho-D-ribosyl)imidazole-4-carboxamide from 5-amino-1-(5-phospho-D-ribosyl)imidazole-4-carboxylate: step 1/2. This is Phosphoribosylaminoimidazole-succinocarboxamide synthase from Chlorobium chlorochromatii (strain CaD3).